The primary structure comprises 673 residues: UvrABC system protein B (673 aa).

The Helicase ATP-binding domain occupies 26 to 183; that stretch reads EGLEDGLAHQ…RRLAELQYTR (158 aa). ATP is bound at residue 39–46; sequence GVTGSGKT. The Beta-hairpin motif lies at 92-115; that stretch reads YYDYYQPEAYVPSSDTFIEKDASV. A Helicase C-terminal domain is found at 431–597; it reads QVDDLLSEIR…GLNKKVVDIL (167 aa). The disordered stretch occupies residues 608-627; that stretch reads AKGRGKSRPIVEPDNVPMDM. The region spanning 633–668 is the UVR domain; that stretch reads QQKIHELEGLMMQHAQNLEFEEAAQIRDQLHQLREL.

It belongs to the UvrB family. In terms of assembly, forms a heterotetramer with UvrA during the search for lesions. Interacts with UvrC in an incision complex.

Its subcellular location is the cytoplasm. Its function is as follows. The UvrABC repair system catalyzes the recognition and processing of DNA lesions. A damage recognition complex composed of 2 UvrA and 2 UvrB subunits scans DNA for abnormalities. Upon binding of the UvrA(2)B(2) complex to a putative damaged site, the DNA wraps around one UvrB monomer. DNA wrap is dependent on ATP binding by UvrB and probably causes local melting of the DNA helix, facilitating insertion of UvrB beta-hairpin between the DNA strands. Then UvrB probes one DNA strand for the presence of a lesion. If a lesion is found the UvrA subunits dissociate and the UvrB-DNA preincision complex is formed. This complex is subsequently bound by UvrC and the second UvrB is released. If no lesion is found, the DNA wraps around the other UvrB subunit that will check the other stand for damage. The sequence is that of UvrABC system protein B from Escherichia fergusonii (strain ATCC 35469 / DSM 13698 / CCUG 18766 / IAM 14443 / JCM 21226 / LMG 7866 / NBRC 102419 / NCTC 12128 / CDC 0568-73).